The sequence spans 216 residues: MFKFLKRIKDDVNMVFEQDPAARTTLEVITSYAGVHAVWSHLIAHELYKKKKYVLARLISQVTRFFTGIEIHPGAQIGRRLFIDHGMGVVIGETCRIGDNVTIYQGVTLGGTGKERGKRHPDIGDNVLIAAGAKVLGNITINANVNIGANSVVLNSVPSYSTVVGIPGHIVKQDGRRIGKTFDHRNLPDPIYEQLKELEKQLEKTRNGEIQDDYII.

The protein belongs to the transferase hexapeptide repeat family.

The protein localises to the cytoplasm. It carries out the reaction L-serine + acetyl-CoA = O-acetyl-L-serine + CoA. The protein operates within amino-acid biosynthesis; L-cysteine biosynthesis; L-cysteine from L-serine: step 1/2. The protein is Serine acetyltransferase (cysE) of Staphylococcus xylosus.